Here is a 341-residue protein sequence, read N- to C-terminus: Methionine import ATP-binding protein MetN (341 aa).

One can recognise an ABC transporter domain in the interval 2-237; it reads IELCGLKKSF…PESLARKMLY (236 aa). An ATP-binding site is contributed by 34–41; that stretch reads GKSGAGKS.

This sequence belongs to the ABC transporter superfamily. Methionine importer (TC 3.A.1.24) family. In terms of assembly, the complex is composed of two ATP-binding proteins (MetN), two transmembrane proteins (MetI) and a solute-binding protein (MetQ).

It localises to the cell inner membrane. It carries out the reaction L-methionine(out) + ATP + H2O = L-methionine(in) + ADP + phosphate + H(+). The catalysed reaction is D-methionine(out) + ATP + H2O = D-methionine(in) + ADP + phosphate + H(+). In terms of biological role, part of the ABC transporter complex MetNIQ involved in methionine import. Responsible for energy coupling to the transport system. The protein is Methionine import ATP-binding protein MetN of Legionella pneumophila (strain Paris).